The primary structure comprises 146 residues: Hemoglobin subunit beta (146 aa).

Valine 1 is subject to N-acetylvaline. In terms of domain architecture, Globin spans 2–146 (HLTPEEKTAV…VANALAHKYH (145 aa)). Phosphothreonine is present on threonine 12. Serine 44 carries the phosphoserine modification. Lysine 59 carries the N6-acetyllysine modification. Histidine 63 is a binding site for heme b. Position 82 is an N6-acetyllysine (lysine 82). Heme b is bound at residue histidine 92. Position 93 is an S-nitrosocysteine (cysteine 93). Lysine 144 is subject to N6-acetyllysine.

This sequence belongs to the globin family. As to quaternary structure, heterotetramer of two alpha chains and two beta chains. In terms of tissue distribution, red blood cells.

Its function is as follows. Involved in oxygen transport from the lung to the various peripheral tissues. This is Hemoglobin subunit beta (HBB) from Mandrillus sphinx (Mandrill).